The following is a 1144-amino-acid chain: Formin-like protein 18 (1144 aa).

Residues 17–193 form the Phosphatase tensin-type domain; the sequence is LEISERVYVF…QYISRRNVGS (177 aa). C126 functions as the Phosphocysteine intermediate in the catalytic mechanism. The C2 tensin-type domain maps to 199–338; the sequence is DQALTLDCVN…FSAEVIFSEM (140 aa). Disordered stretches follow at residues 429–463 and 482–729; these read ISEN…SILK and KIFS…KGRG. Positions 441-450 are enriched in basic and acidic residues; it reads SPEKEKDTMS. A compositionally biased stretch (polar residues) spans 491 to 522; the sequence is SPVTSPLPNRSPTQGSPASISRFHSSPSSLGI. Basic and acidic residues predominate over residues 526-536; the sequence is LHDHGSCKDEE. Positions 538–548 are enriched in low complexity; the sequence is TSSSPASPSIS. A compositionally biased stretch (polar residues) spans 555 to 580; it reads PLTSSQPKKASPQCPQSPTPVHSNGP. Residues 603–613 show a composition bias toward pro residues; that stretch reads RPPPPPPPPPI. The span at 614 to 629 shows a compositional bias: low complexity; it reads SSLRSTPSPSSTSNSI. Residues 633-643 are compositionally biased toward pro residues; that stretch reads GPPPPPPPPPL. The span at 644–653 shows a compositional bias: low complexity; the sequence is QSHRSALSSS. Pro residues predominate over residues 669–678; the sequence is NPPPPPPPPL. Low complexity predominate over residues 679 to 695; sequence HSNSRMGAPTSSLVLKS. Pro residues predominate over residues 696-705; it reads PPVPPPPAPA. The 401-residue stretch at 735 to 1135 folds into the FH2 domain; the sequence is KGQGQTRKAN…RAQKEAENEK (401 aa).

The protein belongs to the formin-like family. Class-II subfamily.

The polypeptide is Formin-like protein 18 (FH18) (Arabidopsis thaliana (Mouse-ear cress)).